The following is a 1225-amino-acid chain: DNA-directed RNA polymerase subunit beta' (1225 aa).

Cys60, Cys62, Cys75, and Cys78 together coordinate Zn(2+). Positions 450, 452, and 454 each coordinate Mg(2+). 4 residues coordinate Zn(2+): Cys818, Cys892, Cys899, and Cys902.

This sequence belongs to the RNA polymerase beta' chain family. The RNAP catalytic core consists of 2 alpha, 1 beta, 1 beta' and 1 omega subunit. When a sigma factor is associated with the core the holoenzyme is formed, which can initiate transcription. Mg(2+) serves as cofactor. The cofactor is Zn(2+).

The catalysed reaction is RNA(n) + a ribonucleoside 5'-triphosphate = RNA(n+1) + diphosphate. DNA-dependent RNA polymerase catalyzes the transcription of DNA into RNA using the four ribonucleoside triphosphates as substrates. The protein is DNA-directed RNA polymerase subunit beta' of Streptococcus pneumoniae (strain ATCC 700669 / Spain 23F-1).